A 149-amino-acid chain; its full sequence is UPF0179 protein Hlac_2319 (149 aa).

It belongs to the UPF0179 family.

This Halorubrum lacusprofundi (strain ATCC 49239 / DSM 5036 / JCM 8891 / ACAM 34) protein is UPF0179 protein Hlac_2319.